The chain runs to 317 residues: Glycine--tRNA ligase alpha subunit (317 aa).

This sequence belongs to the class-II aminoacyl-tRNA synthetase family. As to quaternary structure, tetramer of two alpha and two beta subunits.

The protein localises to the cytoplasm. The catalysed reaction is tRNA(Gly) + glycine + ATP = glycyl-tRNA(Gly) + AMP + diphosphate. This is Glycine--tRNA ligase alpha subunit from Pseudomonas fluorescens (strain ATCC BAA-477 / NRRL B-23932 / Pf-5).